A 654-amino-acid chain; its full sequence is Protein SERAC1 (654 aa).

Residues 32 to 54 (NIIKFTGSLILGGSLFLTYEVLA) traverse the membrane as a helical segment.

The protein belongs to the SERAC1 family. As to expression, widely expressed, with predominant expression in skeletal muscle and brain. In the brain, highest levels are found in the frontal and occipital cortices, cerebellum and hippocampus.

It localises to the mitochondrion membrane. It is found in the endoplasmic reticulum. The protein resides in the mitochondrion. Facilitates the transport of serine from the cytosol to the mitochondria by interacting with and stabilizing Sideroflexin-1 (SFXN1), a mitochondrial serine transporter, playing a fundamental role in the one-carbon cycle responsible for the synthesis of nucleotides needed for mitochondrial DNA replication. Plays an important role in the phosphatidylglycerol (PG) remodeling that is essential for both mitochondrial function and intracellular cholesterol trafficking. Specifically involved in the exchange of the sn-1 acyl chain from PG 16:0/18:1(9Z) (also known as 1-hexadecanoyl-2-(9Z-octadecenoyl)-sn-glycero-3-phospho-(1'-sn-glycerol)) to PG 18:0/18:1(9Z) (also known as 1-octadecanoyl-2-(9Z-octadecenoyl)-sn-glycero-3-phospho-(1'-sn-glycerol)), a step needed in the bis(monoacylglycerol)phosphate biosynthetic pathway. May have acyltransferase activity although the mechanism for PG remodeling has not been determined. This chain is Protein SERAC1 (SERAC1), found in Homo sapiens (Human).